Here is a 215-residue protein sequence, read N- to C-terminus: Probable transaldolase (215 aa).

The Schiff-base intermediate with substrate role is filled by Lys83.

The protein belongs to the transaldolase family. Type 3B subfamily.

The protein localises to the cytoplasm. It carries out the reaction D-sedoheptulose 7-phosphate + D-glyceraldehyde 3-phosphate = D-erythrose 4-phosphate + beta-D-fructose 6-phosphate. Its pathway is carbohydrate degradation; pentose phosphate pathway; D-glyceraldehyde 3-phosphate and beta-D-fructose 6-phosphate from D-ribose 5-phosphate and D-xylulose 5-phosphate (non-oxidative stage): step 2/3. Functionally, transaldolase is important for the balance of metabolites in the pentose-phosphate pathway. In Moorella thermoacetica (strain ATCC 39073 / JCM 9320), this protein is Probable transaldolase.